Consider the following 1221-residue polypeptide: Adhesion G-protein coupled receptor G6 (1221 aa).

The signal sequence occupies residues 1 to 37 (MMFRSDRMWSCHWKWKPSPLLFLFALYIMCVPHSVWG). Over 38 to 862 (CANCRVVLSN…ASQLDARNTK (825 aa)) the chain is Extracellular. Cysteines 41 and 67 form a disulfide. The CUB domain maps to 41–149 (CRVVLSNPSG…KGFNASYIRV (109 aa)). Glu89 and Asp97 together coordinate Ca(2+). Cys94 and Cys111 are oxidised to a cystine. N-linked (GlcNAc...) asparagine glycosylation occurs at Asn121. Residues Asp134, Ser136, and Ile137 each contribute to the Ca(2+) site. 12 N-linked (GlcNAc...) asparagine glycosylation sites follow: Asn143, Asn206, Asn258, Asn314, Asn324, Asn353, Asn438, Asn445, Asn452, Asn485, Asn488, and Asn505. The Pentraxin (PTX) domain occupies 154–356 (RNQKVILPQT…ALKAESNLSC (203 aa)). 2 disulfides stabilise this stretch: Cys186-Cys254 and Cys231-Cys277. A mediates interaction with laminin-2 region spans residues 473–837 (EPRLVLWALL…SDASETVCLC (365 aa)). 2 cysteine pairs are disulfide-bonded: Cys525–Cys560 and Cys548–Cys580. N-linked (GlcNAc...) asparagine glycosylation is found at Asn563, Asn593, Asn600, Asn605, Asn667, Asn673, Asn695, Asn704, Asn750, Asn776, Asn811, and Asn818. Residues 670–853 (SHVNITTRNL…GVLMDLPRSA (184 aa)) enclose the GAIN-B domain. 2 disulfides stabilise this stretch: Cys803–Cys835 and Cys822–Cys837. Residues 803-853 (CAFWDLNKNKSFGGWNTSGCVAHRDSDASETVCLCNHFTHFGVLMDLPRSA) form a GPS region. Residues 842–850 (HFGVLMDLP) are stachel. Residues 863–883 (VLTFISYIGCGISAIFSAATL) traverse the membrane as a helical segment. The Cytoplasmic portion of the chain corresponds to 884-903 (LTYVAFEKLRRDYPSKILMN). A helical membrane pass occupies residues 904 to 924 (LSTALLFLNLLFLLDGWITSF). Residues 925–929 (NVDGL) lie on the Extracellular side of the membrane. The helical transmembrane segment at 930–950 (CIAVAVLLHFFLLATFTWMGL) threads the bilayer. Residues 951–970 (EAIHMYIALVKVFNTYIRRY) lie on the Cytoplasmic side of the membrane. A helical transmembrane segment spans residues 971-991 (ILKFCIIGWGLPALVVSVVLA). Residues 992–1024 (SRNNNEVYGKESYGKEKGDEFCWIQDPVIFYVT) lie on the Extracellular side of the membrane. The helical transmembrane segment at 1025 to 1045 (CAGYFGVMFFLNIAMFIVVMV) threads the bilayer. The Cytoplasmic segment spans residues 1046-1069 (QICGRNGKRSNRTLREEVLRNLRS). Residues 1070 to 1090 (VVSLTFLLGMTWGFAFFAWGP) form a helical membrane-spanning segment. Residues 1091–1092 (LN) lie on the Extracellular side of the membrane. The helical transmembrane segment at 1093-1113 (IPFMYLFSIFNSLQGLFIFIF) threads the bilayer. Asn1103 is a 17alpha-hydroxyprogesterone binding site. Over 1114-1221 (HCAMKENVQK…GQVLVKTGPC (108 aa)) the chain is Cytoplasmic. The disordered stretch occupies residues 1156–1176 (NLGKSLSSSSIGSNSTYLTSK). 2 positions are modified to phosphoserine: Ser1165 and Ser1168.

The protein belongs to the G-protein coupled receptor 2 family. Adhesion G-protein coupled receptor (ADGR) subfamily. Heterodimer of 2 chains generated by proteolytic processing; the large extracellular N-terminal fragment and the membrane-bound C-terminal fragment predominantly remain associated and non-covalently linked. Interacts with Laminin-2; this interaction stabilizes the receptor in an inactive state. Laminin-2 polymerization could facilitate ADGRG6-NTF removal, thereby exposing the tethered agonist to drive myelination. Interacts with PRNP. Interacts with ITGB1. Interacts with LRP1. Post-translationally, proteolytically cleaved into 2 conserved sites: one in the GPS region of the GAIN-B domain (S1 site) and the other in the middle of the extracellular domain (S2 site). The proteolytic cleavage at S1 site generates an extracellular subunit and a seven-transmembrane subunit. Furin is involved in the cleavage of the S2 site generating a soluble fragment. Processing at the GPS region occurred independent of and probably prior to the cleavage at the S2 site. Proteolytic cleavage is required for activation of the receptor. In terms of processing, highly glycosylated. Expressed in placenta and to a lower extent in pancreas and liver. Detected in aortic endothelial cells but not in skin microvascular endothelial cells.

Its subcellular location is the cell membrane. With respect to regulation, forms a heterodimer of 2 chains generated by proteolytic processing that remain associated through non-covalent interactions mediated by the GAIN-B domain. In the inactivated receptor, the Stachel sequence (also named stalk) is embedded in the GAIN-B domain, where it adopts a beta-strand conformation. On activation, the Stachel moves into the 7 transmembrane region and adopts a twisted hook-shaped configuration that forms contacts within the receptor, leading to coupling of a G-alpha protein, which activates signaling. The cleaved GAIN-B and N-terminal domains can then dissociate from the rest of the receptor. Functionally, adhesion G-protein coupled receptor (aGPCR) for steroid hormones, such as progesterone and 17alpha-hydroxyprogesterone (17OHP). Involved in many biological processes, such as myelination, sprouting angiogenesis, placenta, ear and cartilage development. Ligand binding causes a conformation change that triggers signaling via guanine nucleotide-binding proteins (G proteins) and modulates the activity of downstream effectors, such as adenylate cyclase. ADGRG6 is coupled to G(i) G alpha proteins and mediates inhibition of adenylate cyclase. Also able to couple to G(q) G proteins. Involved in myelination of the peripheral nervous system: required for differentiation of promyelinating Schwann cells and for normal myelination of axons. Also acts as a regulator of body length and bone mass. Acts as a regulator of blood-brain barrier formation in the central nervous system vie its association with LRP1 and ITGB1. The polypeptide is Adhesion G-protein coupled receptor G6 (Homo sapiens (Human)).